A 201-amino-acid chain; its full sequence is dITP/XTP pyrophosphatase (201 aa).

8 to 13 contacts substrate; the sequence is TTNENK. The Proton acceptor role is filled by aspartate 68. Aspartate 68 is a binding site for Mg(2+). Residues serine 69, 155 to 158, lysine 177, and 182 to 183 each bind substrate; these read FGYD and HR.

This sequence belongs to the HAM1 NTPase family. In terms of assembly, homodimer. Requires Mg(2+) as cofactor.

It catalyses the reaction XTP + H2O = XMP + diphosphate + H(+). The enzyme catalyses dITP + H2O = dIMP + diphosphate + H(+). It carries out the reaction ITP + H2O = IMP + diphosphate + H(+). Functionally, pyrophosphatase that catalyzes the hydrolysis of nucleoside triphosphates to their monophosphate derivatives, with a high preference for the non-canonical purine nucleotides XTP (xanthosine triphosphate), dITP (deoxyinosine triphosphate) and ITP. Seems to function as a house-cleaning enzyme that removes non-canonical purine nucleotides from the nucleotide pool, thus preventing their incorporation into DNA/RNA and avoiding chromosomal lesions. In Borrelia garinii subsp. bavariensis (strain ATCC BAA-2496 / DSM 23469 / PBi) (Borreliella bavariensis), this protein is dITP/XTP pyrophosphatase.